The primary structure comprises 505 residues: DNA primase large subunit (505 aa).

Positions 253 to 270 (LSHSYTGQDYSTQKNTGK) are interdomain linker. An interacts with PRIM1 region spans residues 266–503 (KNTGKISLDQ…LEMDLEGLEE (238 aa)). Residues C287, C367, C384, and C424 each contribute to the [4Fe-4S] cluster site. Residues 300-442 (HLRHGGRMQY…NVDDCGFSLN (143 aa)) form an RNA:DNA duplex binding region. The disordered stretch occupies residues 463-486 (KEISQPETPQHKPSTQKTRDAASA). The segment covering 467-478 (QPETPQHKPSTQ) has biased composition (polar residues). T470 carries the phosphothreonine modification.

The protein belongs to the eukaryotic-type primase large subunit family. As to quaternary structure, heterodimer of a catalytic subunit PRIM1 and a regulatory subunit PRIM2, also known as the DNA primase complex. Interacts via (C-terminus) with PRIM1. Component of the alpha DNA polymerase complex (also known as the alpha DNA polymerase-primase complex) consisting of four subunits: the catalytic subunit POLA1, the regulatory subunit POLA2, and the primase complex subunits PRIM1 and PRIM2 respectively. Within the complex, POLA1 directly interacts with PRIM2. It depends on [4Fe-4S] cluster as a cofactor.

Functionally, regulatory subunit of the DNA primase complex and component of the DNA polymerase alpha complex (also known as the alpha DNA polymerase-primase complex) which play an essential role in the initiation of DNA synthesis. During the S phase of the cell cycle, the DNA polymerase alpha complex (composed of a catalytic subunit POLA1, an accessory subunit POLA2 and two primase subunits, the catalytic subunit PRIM1 and the regulatory subunit PRIM2) is recruited to DNA at the replicative forks via direct interactions with MCM10 and WDHD1. The primase subunit of the polymerase alpha complex initiates DNA synthesis by oligomerising short RNA primers on both leading and lagging strands. These primers are initially extended by the polymerase alpha catalytic subunit and subsequently transferred to polymerase delta and polymerase epsilon for processive synthesis on the lagging and leading strand, respectively. In the primase complex, both subunits are necessary for the initial di-nucleotide formation, but the extension of the primer depends only on the catalytic subunit. Binds RNA:DNA duplex and coordinates the catalytic activities of PRIM1 and POLA2 during primase-to-polymerase switch. The protein is DNA primase large subunit (Prim2) of Mus musculus (Mouse).